The following is a 181-amino-acid chain: ATP-dependent protease subunit HslV (181 aa).

The active site involves Thr-9. Residues Gly-164, Cys-167, and Thr-170 each coordinate Na(+).

It belongs to the peptidase T1B family. HslV subfamily. As to quaternary structure, a double ring-shaped homohexamer of HslV is capped on each side by a ring-shaped HslU homohexamer. The assembly of the HslU/HslV complex is dependent on binding of ATP.

It localises to the cytoplasm. It catalyses the reaction ATP-dependent cleavage of peptide bonds with broad specificity.. Its activity is regulated as follows. Allosterically activated by HslU binding. Protease subunit of a proteasome-like degradation complex believed to be a general protein degrading machinery. The polypeptide is ATP-dependent protease subunit HslV (Gemmatimonas aurantiaca (strain DSM 14586 / JCM 11422 / NBRC 100505 / T-27)).